The sequence spans 364 residues: MEAVKDVLCMNNGVGENSYVKAEALTIKVMAITKPIVPKAVQSLFTETDHSIPLQVVNVADLGCAVGPQPLEFMSTVIESILKKCGEMGREMPEIQFFLNDLVGNDFNTLFKGLSVVQEKYKKVSWFAMGAPGSFHGRLFPRNSMHLVYSCYSVHWLSEAPKITNEAGLPLNKGKIYMSKTSPPAVTKAYLSQFQEDFSSLLKFRSQELAPNGRVVLIFNGRQTADPTNKDTCYTWDLLAEALSYLVSQGLVDEGKLDSFNVPYYNPSQEEIKYLVDKEGSLTIEFIDTIELEIGGPNGYWSSPESRIRGHRCFTEPLLSHQFGERLMDKLYDKATQILVEDYKHGKEATKNIGIAVVLKKKKL.

An S-adenosyl-L-homocysteine-binding site is contributed by tyrosine 19. A theobromine-binding site is contributed by threonine 26. S-adenosyl-L-homocysteine is bound by residues cysteine 64, glutamine 69, aspartate 101, leucine 102, serine 134, and phenylalanine 135. Theobromine is bound by residues tyrosine 152, histidine 155, and tryptophan 156. Mg(2+) contacts are provided by asparagine 172, aspartate 258, phenylalanine 260, and asparagine 261. Phenylalanine 314 provides a ligand contact to theobromine.

Belongs to the methyltransferase superfamily. Type-7 methyltransferase family. Requires Mg(2+) as cofactor.

The catalysed reaction is 7-methylxanthine + S-adenosyl-L-methionine = theobromine + S-adenosyl-L-homocysteine + H(+). It participates in alkaloid biosynthesis. Its function is as follows. Involved in the biosynthesis of theobromine. The chain is Probable 7-methylxanthine methyltransferase 5 from Theobroma cacao (Cacao).